We begin with the raw amino-acid sequence, 556 residues long: CBS domain-containing protein CBSCBSPB3 (556 aa).

Composition is skewed to polar residues over residues 1–20 (MSTQ…NSTV) and 30–44 (PVQS…NTSK). Residues 1 to 63 (MSTQATGPSS…SQAPSNGERT (63 aa)) are disordered. S2 carries the post-translational modification N-acetylserine. 4 CBS domains span residues 68–127 (RLSK…RPDQ), 134–189 (MTRN…RMEK), 235–294 (ITDN…LSPE), and 302–360 (MTPN…ENSS). The 89-residue stretch at 414-502 (GNSFSFKFED…KVLRLHLDFT (89 aa)) folds into the PB1 domain. Residues 527–549 (WVSWRGGVVVTGAVVLTSIAIVV) traverse the membrane as a helical segment.

The protein resides in the membrane. In Arabidopsis thaliana (Mouse-ear cress), this protein is CBS domain-containing protein CBSCBSPB3 (CBSCBSPB3).